The following is an 814-amino-acid chain: Rho GTPase-activating protein 26 (814 aa).

The BAR domain occupies 7-262; that stretch reads EFSDCCLDSP…MKENPLEHKT (256 aa). In terms of domain architecture, PH spans 265–369; the sequence is PYTMEGYLYV…WMEAMDGREP (105 aa). Residues 383 to 568 form the Rho-GAP domain; the sequence is AQLDSIGFSI…ILIENHEKIF (186 aa). Low complexity predominate over residues 624 to 648; it reads LESVSSNPNSILNSSSSLQPNMNSS. Positions 624 to 696 are disordered; it reads LESVSSNPNS…MPTSSTSSDS (73 aa). Residues 662-672 are compositionally biased toward pro residues; sequence SLPPNPSPTSP. Phosphoserine is present on S668. T670 is subject to Phosphothreonine. Phosphoserine is present on S671. Low complexity predominate over residues 673–696; sequence LSPSWPMFSAPSSPMPTSSTSSDS. Positions 756–814 constitute an SH3 domain; that stretch reads TPFRKAKALYACKAEHDSELSFTAGTVFDNVHPSQEPGWLEGTLNGKTGLIPENYVEFL.

Interacts with NYAP1, NYAP2 and MYO16. Interacts with MICAL1 and WDR44. Binds to the C-terminus of PTK2/FAK1. In terms of assembly, (Microbial infection) Interacts with human parainfluenza virus type 2 proteins P and V. In terms of processing, phosphorylated in a PINK1-dependent fashion promoting retrograde mitochondrial trafficking and clustering.

It localises to the endosome membrane. Its subcellular location is the cytoplasm. It is found in the cell junction. The protein localises to the focal adhesion. The protein resides in the cytoskeleton. In terms of biological role, GTPase-activating protein for RHOA and CDC42. Facilitates mitochondrial quality control by promoting Parkin-mediated recruitment of autophagosomes to damaged mitochondria. Negatively regulates the growth of human parainfluenza virus type 2 by inhibiting hPIV-2-mediated RHOA activation via interaction with two of its viral proteins P and V. Associates with MICAL1 on the endosomal membrane to promote Rab8-Rab10-dependent tubule extension. After dissociation of MICAL1, recruits WDR44 which connects the endoplasmic reticulum (ER) with the endosomal tubule, thereby participating in the export of a subset of neosynthesized proteins. In Homo sapiens (Human), this protein is Rho GTPase-activating protein 26 (ARHGAP26).